The chain runs to 711 residues: 1,4-alpha-glucan branching enzyme GlgB (711 aa).

Aspartate 392 (nucleophile) is an active-site residue. Residue glutamate 443 is the Proton donor of the active site.

This sequence belongs to the glycosyl hydrolase 13 family. GlgB subfamily. In terms of assembly, monomer.

The enzyme catalyses Transfers a segment of a (1-&gt;4)-alpha-D-glucan chain to a primary hydroxy group in a similar glucan chain.. Its pathway is glycan biosynthesis; glycogen biosynthesis. In terms of biological role, catalyzes the formation of the alpha-1,6-glucosidic linkages in glycogen by scission of a 1,4-alpha-linked oligosaccharide from growing alpha-1,4-glucan chains and the subsequent attachment of the oligosaccharide to the alpha-1,6 position. In Corynebacterium jeikeium (strain K411), this protein is 1,4-alpha-glucan branching enzyme GlgB.